Reading from the N-terminus, the 459-residue chain is uncharacterized protein (459 aa).

2 helical membrane passes run 53–75 (IPLL…GLTL) and 111–133 (ARIA…CLCA). Residues 174–196 (HLDNPSAPHPSENPQSRAHPKQN) are disordered.

It is found in the cell membrane. This is an uncharacterized protein from Treponema pallidum (strain Nichols).